Here is a 341-residue protein sequence, read N- to C-terminus: MKVGIVNDSALAVAALRRAIALDPAFEIVWVAGDGEQAVQLAASHTPDVILMDLLMPVMDGVEATRRIMAATPCPIVVVTTDLGRNATQVFDAMGHGAIDAVDTPTLTESDAKLTAGPLLRKMRNIGRLVAGRAAPRPAITEMPGTLAASRLVAIGASAGGPAALAKLLGALPADFCAAVVAVQHVDEAFAPGMADWLDSQCALPVRVAAPGETPQAGTVLIAGTNNHLRLLGSNRMAYTEQPSEYLYRPSIDVFFESVVEYWRGQAIGVLLTGMGRDGASGLKAMRDHGCLTIAQDQATSAVYGMPKAAAAMGAASEILPLTAIAPRLVQACCSVRPPPG.

Positions 2–119 constitute a Response regulatory domain; that stretch reads KVGIVNDSAL…SDAKLTAGPL (118 aa). Asp-53 is modified (4-aspartylphosphate). Positions 146–331 constitute a CheB-type methylesterase domain; it reads TLAASRLVAI…LTAIAPRLVQ (186 aa). Active-site residues include Ser-158, His-185, and Asp-278.

Belongs to the CheB family. Post-translationally, phosphorylated by CheA. Phosphorylation of the N-terminal regulatory domain activates the methylesterase activity.

It is found in the cytoplasm. The enzyme catalyses [protein]-L-glutamate 5-O-methyl ester + H2O = L-glutamyl-[protein] + methanol + H(+). It catalyses the reaction L-glutaminyl-[protein] + H2O = L-glutamyl-[protein] + NH4(+). In terms of biological role, involved in chemotaxis. Part of a chemotaxis signal transduction system that modulates chemotaxis in response to various stimuli. Catalyzes the demethylation of specific methylglutamate residues introduced into the chemoreceptors (methyl-accepting chemotaxis proteins or MCP) by CheR. Also mediates the irreversible deamidation of specific glutamine residues to glutamic acid. This Cupriavidus pinatubonensis (strain JMP 134 / LMG 1197) (Cupriavidus necator (strain JMP 134)) protein is Protein-glutamate methylesterase/protein-glutamine glutaminase 1.